The primary structure comprises 537 residues: ATP synthase subunit alpha (537 aa).

An ATP-binding site is contributed by 174–181; the sequence is GDRQTGKT.

The protein belongs to the ATPase alpha/beta chains family. In terms of assembly, F-type ATPases have 2 components, CF(1) - the catalytic core - and CF(0) - the membrane proton channel. CF(1) has five subunits: alpha(3), beta(3), gamma(1), delta(1), epsilon(1). CF(0) has three main subunits: a(1), b(2) and c(9-12). The alpha and beta chains form an alternating ring which encloses part of the gamma chain. CF(1) is attached to CF(0) by a central stalk formed by the gamma and epsilon chains, while a peripheral stalk is formed by the delta and b chains.

The protein resides in the cell inner membrane. It catalyses the reaction ATP + H2O + 4 H(+)(in) = ADP + phosphate + 5 H(+)(out). Produces ATP from ADP in the presence of a proton gradient across the membrane. The alpha chain is a regulatory subunit. This Verminephrobacter eiseniae (strain EF01-2) protein is ATP synthase subunit alpha.